A 221-amino-acid chain; its full sequence is GTPase Obg (221 aa).

The 61-residue stretch at 1–61 folds into the OBG-type G domain; it reads PSALRLVLLN…LKYKLLEIVQ (61 aa). Residues 10 to 13 and 42 to 44 contribute to the GTP site; these read NKAD and SAV. The OCT domain occupies 82–162; the sequence is VVHRTKGQFQ…IGGISFEWEP (81 aa).

This sequence belongs to the TRAFAC class OBG-HflX-like GTPase superfamily. OBG GTPase family. Monomer. Requires Mg(2+) as cofactor.

It is found in the cytoplasm. In terms of biological role, an essential GTPase which binds GTP, GDP and possibly (p)ppGpp with moderate affinity, with high nucleotide exchange rates and a fairly low GTP hydrolysis rate. Plays a role in control of the cell cycle, stress response, ribosome biogenesis and in those bacteria that undergo differentiation, in morphogenesis control. The protein is GTPase Obg of Corynebacterium melassecola.